A 379-amino-acid polypeptide reads, in one-letter code: MAPNIRKSHPLLKMINNSLIDLPSPSNISAWWNFGSLLGICLITQILTGLLLATHYTADTHLAFSSVSHICRDVQYGWLIRNLHANGASFFFICIYLHIGRGLYYGSYLYKETWNIGIILLLTLMATAFVGYVLPWGQMSFWGATVITNLLSAIPYIGQALVEWAWGGFSVDNPTLTRFFALHFLLPFLIVSLSIIHLTFLHESGSNNPLGIISQSDKIPFHPYFTTKDMLGFTLMFFPLLTLAFFFPNFLGDPENFTPANPLITPPHIKPEWYFLFAYAILRSIPNKLGGVLALTASVLILFLSPLLHASKMRSLTFRPMSQLLFWLLIANLLILTWIGSQPVEDPFIIIGQVASFTYFFTLLFLFPITATLENKILY.

Helical transmembrane passes span 34-54 (FGSL…LLAT), 78-99 (WLIR…YLHI), 114-134 (WNIG…GYVL), and 179-199 (FFAL…IHLT). Heme b is bound by residues histidine 84 and histidine 98. Positions 183 and 197 each coordinate heme b. Histidine 202 contributes to the a ubiquinone binding site. The next 4 helical transmembrane spans lie at 227–247 (TKDM…AFFF), 289–309 (LGGV…PLLH), 321–341 (MSQL…WIGS), and 348–368 (FIII…FLFP).

It belongs to the cytochrome b family. As to quaternary structure, the cytochrome bc1 complex contains 11 subunits: 3 respiratory subunits (MT-CYB, CYC1 and UQCRFS1), 2 core proteins (UQCRC1 and UQCRC2) and 6 low-molecular weight proteins (UQCRH/QCR6, UQCRB/QCR7, UQCRQ/QCR8, UQCR10/QCR9, UQCR11/QCR10 and a cleavage product of UQCRFS1). This cytochrome bc1 complex then forms a dimer. It depends on heme b as a cofactor.

Its subcellular location is the mitochondrion inner membrane. Its function is as follows. Component of the ubiquinol-cytochrome c reductase complex (complex III or cytochrome b-c1 complex) that is part of the mitochondrial respiratory chain. The b-c1 complex mediates electron transfer from ubiquinol to cytochrome c. Contributes to the generation of a proton gradient across the mitochondrial membrane that is then used for ATP synthesis. This chain is Cytochrome b (MT-CYB), found in Tinamus major (Great tinamou).